We begin with the raw amino-acid sequence, 131 residues long: Global transcriptional regulator Spx 2 (131 aa).

Cysteines 10 and 13 form a disulfide.

The protein belongs to the ArsC family. Spx subfamily. Interacts with the C-terminal domain of the alpha subunit of the RNAP.

The protein resides in the cytoplasm. Global transcriptional regulator that plays a key role in stress response and exerts either positive or negative regulation of genes. Acts by interacting with the C-terminal domain of the alpha subunit of the RNA polymerase (RNAP). This interaction can enhance binding of RNAP to the promoter region of target genes and stimulate their transcription, or block interaction of RNAP with activator. The polypeptide is Global transcriptional regulator Spx 2 (Bacillus anthracis).